Reading from the N-terminus, the 311-residue chain is LOB domain-containing protein 10 (311 aa).

Residues 4 to 105 (TPCAACKLLR…QDLLTAKEEL (102 aa)) form the LOB domain. Low complexity predominate over residues 264-277 (LQEGQEQTEEGQFL). Positions 264 to 311 (LQEGQEQTEEGQFLMQPMGQENLHDEEEEEELEPPVKWRMSENKEASF) are disordered. Residues 287-296 (HDEEEEEELE) are compositionally biased toward acidic residues. Positions 297-311 (PPVKWRMSENKEASF) are enriched in basic and acidic residues.

It belongs to the LOB domain-containing protein family.

The protein is LOB domain-containing protein 10 (LBD10) of Arabidopsis thaliana (Mouse-ear cress).